Reading from the N-terminus, the 333-residue chain is Anthranilate phosphoribosyltransferase (333 aa).

Residues Gly80, 83–84 (GD), Thr88, 90–93 (NLST), 108–116 (KHGNRSASG), and Ser120 contribute to the 5-phospho-alpha-D-ribose 1-diphosphate site. Anthranilate is bound at residue Gly80. Ser92 is a binding site for Mg(2+). Asn111 contacts anthranilate. Arg166 serves as a coordination point for anthranilate. Mg(2+)-binding residues include Asp224 and Glu225.

The protein belongs to the anthranilate phosphoribosyltransferase family. In terms of assembly, homodimer. Mg(2+) is required as a cofactor.

The enzyme catalyses N-(5-phospho-beta-D-ribosyl)anthranilate + diphosphate = 5-phospho-alpha-D-ribose 1-diphosphate + anthranilate. The protein operates within amino-acid biosynthesis; L-tryptophan biosynthesis; L-tryptophan from chorismate: step 2/5. Its function is as follows. Catalyzes the transfer of the phosphoribosyl group of 5-phosphorylribose-1-pyrophosphate (PRPP) to anthranilate to yield N-(5'-phosphoribosyl)-anthranilate (PRA). The polypeptide is Anthranilate phosphoribosyltransferase (Pyrobaculum aerophilum (strain ATCC 51768 / DSM 7523 / JCM 9630 / CIP 104966 / NBRC 100827 / IM2)).